Consider the following 369-residue polypeptide: tRNA-specific 2-thiouridylase MnmA (369 aa).

ATP-binding positions include 11–18 (GMSGGVDS) and Met-37. Residues 97 to 99 (NPD) form an interaction with target base in tRNA region. The active-site Nucleophile is the Cys-102. A disulfide bridge links Cys-102 with Cys-199. Residue Gly-127 coordinates ATP. The tract at residues 149-151 (KDQ) is interaction with tRNA. Cys-199 (cysteine persulfide intermediate) is an active-site residue. An interaction with tRNA region spans residues 311-312 (RY).

This sequence belongs to the MnmA/TRMU family. As to quaternary structure, interacts with TusE.

The protein resides in the cytoplasm. The enzyme catalyses S-sulfanyl-L-cysteinyl-[protein] + uridine(34) in tRNA + AH2 + ATP = 2-thiouridine(34) in tRNA + L-cysteinyl-[protein] + A + AMP + diphosphate + H(+). In terms of biological role, catalyzes the 2-thiolation of uridine at the wobble position (U34) of tRNA(Lys), tRNA(Glu) and tRNA(Gln), leading to the formation of s(2)U34, the first step of tRNA-mnm(5)s(2)U34 synthesis. Sulfur is provided by IscS, via a sulfur-relay system. Binds ATP and its substrate tRNAs. In Enterobacter sp. (strain 638), this protein is tRNA-specific 2-thiouridylase MnmA.